Reading from the N-terminus, the 299-residue chain is Putative zinc-binding protein ORF12 (299 aa).

The chain is Putative zinc-binding protein ORF12 (ORF12) from Ictaluridae (bullhead catfishes).